The chain runs to 138 residues: ATP synthase epsilon chain (138 aa).

It belongs to the ATPase epsilon chain family. As to quaternary structure, F-type ATPases have 2 components, CF(1) - the catalytic core - and CF(0) - the membrane proton channel. CF(1) has five subunits: alpha(3), beta(3), gamma(1), delta(1), epsilon(1). CF(0) has three main subunits: a, b and c.

It localises to the cell inner membrane. In terms of biological role, produces ATP from ADP in the presence of a proton gradient across the membrane. The sequence is that of ATP synthase epsilon chain from Cupriavidus metallidurans (strain ATCC 43123 / DSM 2839 / NBRC 102507 / CH34) (Ralstonia metallidurans).